A 415-amino-acid chain; its full sequence is L-cysteine:1D-myo-inositol 2-amino-2-deoxy-alpha-D-glucopyranoside ligase 2 (415 aa).

Residue Cys-44 participates in Zn(2+) binding. L-cysteinyl-5'-AMP is bound by residues 44-47, Thr-59, and 82-84; these read CGIT and NIT. A 'HIGH' region motif is present at residues 46 to 56; it reads ITPYDSTHLGH. The short motif at 188-193 is the 'ERGGDP' region element; the sequence is ERGGDP. Trp-228 provides a ligand contact to L-cysteinyl-5'-AMP. Cys-232 provides a ligand contact to Zn(2+). 250 to 252 serves as a coordination point for L-cysteinyl-5'-AMP; that stretch reads GSD. Residue His-257 participates in Zn(2+) binding. L-cysteinyl-5'-AMP is bound at residue Ile-284. Positions 290–294 match the 'KMSKS' region motif; the sequence is KMSKS.

It belongs to the class-I aminoacyl-tRNA synthetase family. MshC subfamily. Monomer. Requires Zn(2+) as cofactor.

The catalysed reaction is 1D-myo-inositol 2-amino-2-deoxy-alpha-D-glucopyranoside + L-cysteine + ATP = 1D-myo-inositol 2-(L-cysteinylamino)-2-deoxy-alpha-D-glucopyranoside + AMP + diphosphate + H(+). In terms of biological role, catalyzes the ATP-dependent condensation of GlcN-Ins and L-cysteine to form L-Cys-GlcN-Ins. In Corynebacterium jeikeium (strain K411), this protein is L-cysteine:1D-myo-inositol 2-amino-2-deoxy-alpha-D-glucopyranoside ligase 2.